A 118-amino-acid polypeptide reads, in one-letter code: Immunoglobulin heavy variable 4-31 (118 aa).

The N-terminal stretch at 1-19 (MKHLWFFLLLVAAPRWVLS) is a signal peptide. Residues 20–44 (QVQLQESGPGLVKPSQTLSLTCTVS) are framework-1. The Ig-like domain maps to 20–118 (QVQLQESGPG…ADTAVYYCAR (99 aa)). C41 and C116 form a disulfide bridge. The complementarity-determining-1 stretch occupies residues 45 to 54 (GGSISSGGYY). The interval 55–71 (WSWIRQHPGKGLEWIGY) is framework-2. Residues 72-78 (IYYSGST) are complementarity-determining-2. Residues 79 to 116 (YYNPSLKSLVTISVDTSKNQFSLKLSSVTAADTAVYYC) form a framework-3 region. The tract at residues 117 to 118 (AR) is complementarity-determining-3.

Immunoglobulins are composed of two identical heavy chains and two identical light chains; disulfide-linked.

The protein localises to the secreted. It is found in the cell membrane. Functionally, v region of the variable domain of immunoglobulin heavy chains that participates in the antigen recognition. Immunoglobulins, also known as antibodies, are membrane-bound or secreted glycoproteins produced by B lymphocytes. In the recognition phase of humoral immunity, the membrane-bound immunoglobulins serve as receptors which, upon binding of a specific antigen, trigger the clonal expansion and differentiation of B lymphocytes into immunoglobulins-secreting plasma cells. Secreted immunoglobulins mediate the effector phase of humoral immunity, which results in the elimination of bound antigens. The antigen binding site is formed by the variable domain of one heavy chain, together with that of its associated light chain. Thus, each immunoglobulin has two antigen binding sites with remarkable affinity for a particular antigen. The variable domains are assembled by a process called V-(D)-J rearrangement and can then be subjected to somatic hypermutations which, after exposure to antigen and selection, allow affinity maturation for a particular antigen. This is Immunoglobulin heavy variable 4-31 from Homo sapiens (Human).